The chain runs to 287 residues: Diphthine methyl ester synthase (287 aa).

S-adenosyl-L-methionine contacts are provided by residues Leu9, Asp84, Gly87, Ser112–Ile113, Leu163, Val221, and His248.

Belongs to the diphthine synthase family.

It is found in the cytoplasm. It carries out the reaction 2-[(3S)-amino-3-carboxypropyl]-L-histidyl-[translation elongation factor 2] + 4 S-adenosyl-L-methionine = diphthine methyl ester-[translation elongation factor 2] + 4 S-adenosyl-L-homocysteine + 3 H(+). It participates in protein modification; peptidyl-diphthamide biosynthesis. Functionally, S-adenosyl-L-methionine-dependent methyltransferase that catalyzes four methylations of the modified target histidine residue in translation elongation factor 2 (EF-2), to form an intermediate called diphthine methyl ester. The four successive methylation reactions represent the second step of diphthamide biosynthesis. This Neurospora crassa (strain ATCC 24698 / 74-OR23-1A / CBS 708.71 / DSM 1257 / FGSC 987) protein is Diphthine methyl ester synthase (dph-5).